Consider the following 395-residue polypeptide: Cytochrome b561 and DOMON domain-containing protein At5g47530 (395 aa).

The N-terminal stretch at 1–24 is a signal peptide; sequence MAISSNLLLCLSLFIFIITKSALA. Residues 47–162 form the DOMON domain; it reads LDSFLHYTYD…GIINTVWQDG (116 aa). One can recognise a Cytochrome b561 domain in the interval 176–371; that stretch reads GNNVRSVSTL…LEGFTWYVVI (196 aa). A run of 2 helical transmembrane segments spans residues 210–230 and 242–262; these read IHGI…AIIA and AWFY…VAGW. Residues H211, H247, and H280 each contribute to the heme b site. The chain crosses the membrane as a helical span at residues 282–302; that stretch reads AVGIALFCLATIQVFAMFLRP. Residue H316 coordinates heme b. 2 consecutive transmembrane segments (helical) span residues 318–338 and 351–371; these read TVGY…LDIL and IIVV…YVVI.

The cofactor is heme b.

It localises to the membrane. Functionally, may act as a catecholamine-responsive trans-membrane electron transporter. This chain is Cytochrome b561 and DOMON domain-containing protein At5g47530, found in Arabidopsis thaliana (Mouse-ear cress).